The sequence spans 128 residues: Small ribosomal subunit protein eS8 (128 aa).

The protein belongs to the eukaryotic ribosomal protein eS8 family. In terms of assembly, part of the 30S ribosomal subunit.

The protein is Small ribosomal subunit protein eS8 of Metallosphaera sedula (strain ATCC 51363 / DSM 5348 / JCM 9185 / NBRC 15509 / TH2).